We begin with the raw amino-acid sequence, 491 residues long: Probable diguanylate cyclase CdgI (491 aa).

The Cytoplasmic portion of the chain corresponds to 1–54 (MIQSTRISMGLFFKYFLSLTKIDPGQNYISLPSIKSSTHIALLFMVSMGTQKLK). A helical membrane pass occupies residues 55–75 (AQSFFIFSLLLTLILFCITTL). Residues 76-89 (YNENTNVKLIPQMN) are Periplasmic-facing. Residues 90 to 110 (YLMVVVALFFLNAVIFLFMLM) form a helical membrane-spanning segment. At 111 to 121 (KYFTNKQILPT) the chain is on the cytoplasmic side. The helical transmembrane segment at 122–142 (LILSLAFLSGLIYLVETIVII) threads the bilayer. Over 143–158 (HKPINGSTLIQTKSND) the chain is Periplasmic. Residues 159 to 179 (VSIFYIFRQLSFICLTSLALF) traverse the membrane as a helical segment. At 180-193 (CYGKDNILDNNKKK) the chain is on the cytoplasmic side. Residues 194-214 (TGILLLALIPFLVFPLLAHNL) traverse the membrane as a helical segment. Residues 215–236 (SSYNADYSLYVVDYCPDNHTAT) are Periplasmic-facing. The helical transmembrane segment at 237 to 257 (WGINYTKILVCLWAFLLFFII) threads the bilayer. Residues 258–265 (MRTRLASE) are Cytoplasmic-facing. Residues 266–286 (LWPLIALLCLASLCCNLLLLT) traverse the membrane as a helical segment. The Periplasmic portion of the chain corresponds to 287 to 293 (LDEYNYT). The helical transmembrane segment at 294-314 (IWYISRGIEVSSKLFVVSFLI) threads the bilayer. Residues 315–491 (YNIFQELQLS…GGNKVIIHHI (177 aa)) lie on the Cytoplasmic side of the membrane. Residues 356 to 491 (KDFCVMLVDI…GGNKVIIHHI (136 aa)) form the GGDEF domain. The Mg(2+) site is built by D364 and I365. Positions 372, 377, and 381 each coordinate substrate. E407 contributes to the Mg(2+) binding site. E407 (proton acceptor) is an active-site residue. Residue R427 coordinates substrate.

As to quaternary structure, homodimer. Requires Mg(2+) as cofactor.

It is found in the cell inner membrane. It carries out the reaction 2 GTP = 3',3'-c-di-GMP + 2 diphosphate. The protein operates within purine metabolism; 3',5'-cyclic di-GMP biosynthesis. Catalyzes the synthesis of cyclic-di-GMP (c-di-GMP) via the condensation of 2 GTP molecules. The chain is Probable diguanylate cyclase CdgI from Escherichia coli (strain K12).